Consider the following 239-residue polypeptide: Norbelladine 4'-O-methyltransferase 3 (239 aa).

Residues Val-55, Glu-77, 79 to 80 (GV), Ser-85, Asp-103, and Ala-132 contribute to the S-adenosyl-L-methionine site. Asp-155 provides a ligand contact to a divalent metal cation. Asp-157 contacts S-adenosyl-L-methionine. A divalent metal cation-binding residues include Asp-181 and Asn-182.

It belongs to the class I-like SAM-binding methyltransferase superfamily. Cation-dependent O-methyltransferase family. Mg(2+) serves as cofactor.

It catalyses the reaction norbelladine + S-adenosyl-L-methionine = 4'-O-methylnorbelladine + S-adenosyl-L-homocysteine + H(+). It participates in alkaloid biosynthesis. 4'-O-methyltransferase converting norbelladine to 4'-O-methylnorbelladine. 4'-O-methylnorbelladine is a precursor to all Amaryllidaceae alkaloids such as galanthamine, lycorine and haemanthamine, and including haemanthamine- and crinamine-type alkaloids, promising anticancer agents. The sequence is that of Norbelladine 4'-O-methyltransferase 3 from Narcissus aff. pseudonarcissus MK-2014 (Daffodil).